Reading from the N-terminus, the 872-residue chain is Cilia- and flagella-associated protein 58 (872 aa).

Coiled coils occupy residues valine 106–glutamate 595 and glutamate 642–lysine 839.

It belongs to the CFAP58 family. As to quaternary structure, interacts with ODFP2.

The protein resides in the cell projection. It is found in the cilium. It localises to the flagellum. Its subcellular location is the cytoplasm. The protein localises to the cytoskeleton. The protein resides in the microtubule organizing center. It is found in the centrosome. Its function is as follows. Has an essential role in the assembly and organization of the sperm flagellar axoneme. Required for the elongation of the primary cilium and sperm flagellar midpiece via modulation of the Notch signaling pathway. This Homo sapiens (Human) protein is Cilia- and flagella-associated protein 58.